A 351-amino-acid polypeptide reads, in one-letter code: Transaldolase (351 aa).

Catalysis depends on lysine 138, which acts as the Schiff-base intermediate with substrate.

This sequence belongs to the transaldolase family. Type 2 subfamily.

Its subcellular location is the cytoplasm. It carries out the reaction D-sedoheptulose 7-phosphate + D-glyceraldehyde 3-phosphate = D-erythrose 4-phosphate + beta-D-fructose 6-phosphate. Its pathway is carbohydrate degradation; pentose phosphate pathway; D-glyceraldehyde 3-phosphate and beta-D-fructose 6-phosphate from D-ribose 5-phosphate and D-xylulose 5-phosphate (non-oxidative stage): step 2/3. Its function is as follows. Transaldolase is important for the balance of metabolites in the pentose-phosphate pathway. This is Transaldolase from Neisseria meningitidis serogroup C (strain 053442).